The chain runs to 220 residues: MPNKSPTRTLYALFGGTFDPIHYGHLKPVETLAQQVGLQHIILLPNHVPPHRPQPEANAQQRLKMVELAVAGNPLFSVDSRELLRDTPSFTIDTLESLRKERGAERPLAFIIGQDSLLSLHKWHRWQSLLDVCHLLVCARPGYAQTLETPELQQWLDAHRVFDPQALSLRPHGAIYLADTPLLDISATDIRHRRHNGESCDDLLPRAVQRYIELQGLYRG.

Belongs to the NadD family.

It carries out the reaction nicotinate beta-D-ribonucleotide + ATP + H(+) = deamido-NAD(+) + diphosphate. It functions in the pathway cofactor biosynthesis; NAD(+) biosynthesis; deamido-NAD(+) from nicotinate D-ribonucleotide: step 1/1. Its function is as follows. Catalyzes the reversible adenylation of nicotinate mononucleotide (NaMN) to nicotinic acid adenine dinucleotide (NaAD). The chain is Probable nicotinate-nucleotide adenylyltransferase from Yersinia enterocolitica serotype O:8 / biotype 1B (strain NCTC 13174 / 8081).